The chain runs to 348 residues: VIP36-like protein (348 aa).

The N-terminal stretch at 1-38 (MAATLGPLGSWQQWRRCLLARDGSRMLLLLLLLGSGQG) is a signal peptide. Topologically, residues 39–313 (PQQVGAGQTF…APLPPLSGLA (275 aa)) are lumenal. An L-type lectin-like domain is found at 49-274 (EYLKREHSLS…DVISLKLFEL (226 aa)). A carbohydrate contacts are provided by S93 and D128. The Ca(2+) site is built by D159, Y161, and N163. 161–163 (YPN) contacts a carbohydrate. N181 is a glycosylation site (N-linked (GlcNAc...) asparagine). H188 is a binding site for a carbohydrate. Ca(2+) is bound at residue D191. Residues C200 and C237 are joined by a disulfide bond. 258 to 260 (GDL) provides a ligand contact to a carbohydrate. The chain crosses the membrane as a helical span at residues 314–334 (LFHIVFFSLVIFVFAIVIGII). At 335 to 348 (LYNKWQEQSRKRFY) the chain is on the cytoplasmic side. An Endoplasmic reticulum retention signal motif is present at residues 344 to 346 (RKR).

It localises to the endoplasmic reticulum membrane. Its subcellular location is the golgi apparatus membrane. In terms of biological role, may be involved in the regulation of export from the endoplasmic reticulum of a subset of glycoproteins. May function as a regulator of ERGIC-53. In Pongo abelii (Sumatran orangutan), this protein is VIP36-like protein (LMAN2L).